The primary structure comprises 320 residues: Coproporphyrin III ferrochelatase (320 aa).

Residues histidine 194 and glutamate 273 each coordinate Fe(2+).

It belongs to the ferrochelatase family.

The protein resides in the cytoplasm. It carries out the reaction Fe-coproporphyrin III + 2 H(+) = coproporphyrin III + Fe(2+). It functions in the pathway porphyrin-containing compound metabolism; protoheme biosynthesis. Its function is as follows. Involved in coproporphyrin-dependent heme b biosynthesis. Catalyzes the insertion of ferrous iron into coproporphyrin III to form Fe-coproporphyrin III. The polypeptide is Coproporphyrin III ferrochelatase (Symbiobacterium thermophilum (strain DSM 24528 / JCM 14929 / IAM 14863 / T)).